Reading from the N-terminus, the 360-residue chain is Protein Wnt-2 (360 aa).

The first 26 residues, 1 to 26 (MNSSSLFGIWLSVPLILSWVTPQVSS), serve as a signal peptide directing secretion. Cystine bridges form between cysteine 76/cysteine 87, cysteine 127/cysteine 135, cysteine 137/cysteine 157, cysteine 206/cysteine 220, cysteine 208/cysteine 215, cysteine 278/cysteine 309, cysteine 294/cysteine 304, cysteine 308/cysteine 348, cysteine 324/cysteine 339, cysteine 326/cysteine 336, and cysteine 331/cysteine 332. Serine 212 carries O-palmitoleoyl serine; by PORCN lipidation. Asparagine 295 carries an N-linked (GlcNAc...) asparagine glycan.

The protein belongs to the Wnt family. Palmitoleoylation is required for efficient binding to frizzled receptors. Depalmitoleoylation leads to Wnt signaling pathway inhibition.

Its subcellular location is the secreted. The protein localises to the extracellular space. It is found in the extracellular matrix. In terms of biological role, ligand for members of the frizzled family of seven transmembrane receptors. Functions in the canonical Wnt signaling pathway that results in activation of transcription factors of the TCF/LEF family. Functions as a upstream regulator of FGF10 expression. Plays an important role in embryonic lung development. May contribute to embryonic brain development by regulating the proliferation of dopaminergic precursors and neurons. This is Protein Wnt-2 (WNT2) from Monodelphis domestica (Gray short-tailed opossum).